The primary structure comprises 133 residues: Small ribosomal subunit protein uS8 (133 aa).

This sequence belongs to the universal ribosomal protein uS8 family. In terms of assembly, part of the 30S ribosomal subunit.

Functionally, one of the primary rRNA binding proteins, it binds directly to 16S rRNA central domain where it helps coordinate assembly of the platform of the 30S subunit. The protein is Small ribosomal subunit protein uS8 of Aeropyrum pernix (strain ATCC 700893 / DSM 11879 / JCM 9820 / NBRC 100138 / K1).